A 311-amino-acid chain; its full sequence is Peptide methionine sulfoxide reductase MsrA/MsrB (311 aa).

The interval 1–155 (MAEIYLAGGC…PGGYCHINVN (155 aa)) is peptide methionine sulfoxide reductase A. Cysteine 10 is an active-site residue. The region spanning 172–295 (DAELKEQLTQ…NSAALRFIPK (124 aa)) is the MsrB domain. Cysteine 284 acts as the Nucleophile in catalysis.

In the N-terminal section; belongs to the MsrA Met sulfoxide reductase family. The protein in the C-terminal section; belongs to the MsrB Met sulfoxide reductase family.

The catalysed reaction is L-methionyl-[protein] + [thioredoxin]-disulfide + H2O = L-methionyl-(S)-S-oxide-[protein] + [thioredoxin]-dithiol. The enzyme catalyses [thioredoxin]-disulfide + L-methionine + H2O = L-methionine (S)-S-oxide + [thioredoxin]-dithiol. It catalyses the reaction L-methionyl-[protein] + [thioredoxin]-disulfide + H2O = L-methionyl-(R)-S-oxide-[protein] + [thioredoxin]-dithiol. Has an important function as a repair enzyme for proteins that have been inactivated by oxidation. Catalyzes the reversible oxidation-reduction of methionine sulfoxide in proteins to methionine. Involved in protection against oxidative stress when the bacterium enters the host bloodstream and required for maximal growth under aerobic and anaerobic conditions. The chain is Peptide methionine sulfoxide reductase MsrA/MsrB (msrAB) from Streptococcus gordonii (strain Challis / ATCC 35105 / BCRC 15272 / CH1 / DL1 / V288).